A 92-amino-acid polypeptide reads, in one-letter code: Elongation factor 1-beta (92 aa).

This sequence belongs to the EF-1-beta/EF-1-delta family.

Functionally, promotes the exchange of GDP for GTP in EF-1-alpha/GDP, thus allowing the regeneration of EF-1-alpha/GTP that could then be used to form the ternary complex EF-1-alpha/GTP/AAtRNA. This is Elongation factor 1-beta (ef1b) from Pyrobaculum aerophilum (strain ATCC 51768 / DSM 7523 / JCM 9630 / CIP 104966 / NBRC 100827 / IM2).